The chain runs to 61 residues: Japonicin-1CDYa (61 aa).

A signal peptide spans 1-22 (MFTLKKSLLLLFFLGVINVSLC). Residues 23-45 (EEERDADEEERRDDPEERDVEVE) constitute a propeptide that is removed on maturation. Cysteine 55 and cysteine 61 are oxidised to a cystine.

The protein belongs to the frog skin active peptide (FSAP) family. Brevinin subfamily. In terms of tissue distribution, expressed by the skin glands.

The protein localises to the secreted. Antimicrobial peptide. Has low activity against the Gram-positive bacterium S.aureus (MIC&gt;100 uM) and the Gram-negative bacterium E.coli (MIC=25 uM). Lacks hemolytic activity against human erythrocytes. The sequence is that of Japonicin-1CDYa from Rana dybowskii (Dybovsky's frog).